The chain runs to 388 residues: Quinolone resistance protein NorA (388 aa).

The next 12 membrane-spanning stretches (helical) occupy residues 5–25 (IFVL…VIPV), 42–62 (LLVA…GTLA), 69–89 (LIIC…AVGH), 99–119 (VIGG…IADI), 129–149 (FGYM…IGGF), 157–177 (MPFY…IVLI), 201–221 (WKVF…LSAF), 239–259 (DISI…IYFF), 269–289 (LTFI…LVFA), 293–313 (WSIM…RPAI), 331–351 (LNST…GALF), and 355–375 (IEAP…IVLI).

The protein belongs to the major facilitator superfamily. TCR/Tet family.

The protein localises to the cell membrane. Involved in quinolone resistance. May constitute a membrane-associated active efflux pump of hydrophilic quinolones. The protein is Quinolone resistance protein NorA (norA) of Staphylococcus aureus (strain MSSA476).